A 224-amino-acid chain; its full sequence is UPF0758 protein Avin_02940 (224 aa).

The MPN domain maps to 102–224 (ALESPQAVRD…PLSMAEQGWL (123 aa)). The Zn(2+) site is built by H173, H175, and D186. The JAMM motif signature appears at 173–186 (HNHPSGIAEPSQAD).

Belongs to the UPF0758 family.

This chain is UPF0758 protein Avin_02940, found in Azotobacter vinelandii (strain DJ / ATCC BAA-1303).